The chain runs to 988 residues: Transposase for transposon Tn1546 (988 aa).

It belongs to the transposase 7 family.

In terms of biological role, required for transposition of transposon Tn1546. The chain is Transposase for transposon Tn1546 from Enterococcus faecium (Streptococcus faecium).